A 267-amino-acid chain; its full sequence is Non-structural protein NS-S (267 aa).

The protein belongs to the phlebovirus NS-S protein family.

The polypeptide is Non-structural protein NS-S (NSS) (Homo sapiens (Human)).